A 440-amino-acid chain; its full sequence is uncharacterized protein (440 aa).

Transmembrane regions (helical) follow at residues 24–44, 47–67, 93–113, 117–137, 155–175, 183–203, 229–249, 276–296, 323–343, 346–366, 379–399, and 400–420; these read VVIG…APAA, AGSG…CNAI, FWGY…CAAM, VGFY…VVAL, IVAV…GSGA, IGVD…FFAF, LALG…IAVL, VVQI…ILGV, PFRA…TADI, AIGF…ASAL, IPLV…LSSV, and AAGA…RIIT.

It belongs to the amino acid-polyamine-organocation (APC) superfamily.

The protein localises to the cell membrane. Probable amino-acid or metabolite transport protein. This is an uncharacterized protein from Mycobacterium bovis (strain ATCC BAA-935 / AF2122/97).